The sequence spans 269 residues: Probable cysteine protease avirulence protein AvrPpiC2 (269 aa).

The interval methionine 1 to arginine 39 is disordered. Polar residues predominate over residues serine 13–asparagine 27. Active-site residues include cysteine 72, histidine 213, and aspartate 230.

The protein belongs to the peptidase C58 family.

Functionally, potential cysteine protease. Avirulence protein, which may be essential during infection of plant cells from Pea and some Arabidopsis thaliana cultivars. May act by affecting the plant defense system. In plants lacking appropriate resistance (R) gene, it probably impairs the plant defense system and leads to the bacteria multiplication. In contrast, in plants containing the appropriate R protein, it is unable to induce disease symptoms, explaining its avirulence name. This is Probable cysteine protease avirulence protein AvrPpiC2 (avrPpiC2) from Pseudomonas syringae pv. pisi.